Consider the following 367-residue polypeptide: Germination protease (367 aa).

Positions 1–15 are excised as a propeptide; that stretch reads MKEPLDLSKYSVRTD.

Belongs to the peptidase A25 family. Homotetramer. Autoproteolytically processed. The inactive tetrameric zymogen termed p46 autoprocesses to a smaller form termed p41, which is active only during spore germination.

It carries out the reaction Endopeptidase action with P4 Glu or Asp, P1 preferably Glu &gt; Asp, P1' hydrophobic and P2' Ala.. Its function is as follows. Initiates the rapid degradation of small, acid-soluble proteins during spore germination. This chain is Germination protease, found in Bacillus cereus (strain AH187).